A 234-amino-acid polypeptide reads, in one-letter code: HTH-type transcriptional regulator ArcR (234 aa).

40-129 (VRHYTKGQVI…MAFLCKANDD (90 aa)) lines the a nucleoside 3',5'-cyclic phosphate pocket. The HTH crp-type domain occupies 155–228 (KFAKDRIIKL…HKNWLVSKHL (74 aa)). Residues 188-207 (IQLMSDMAGISRETAGHIIH) constitute a DNA-binding region (H-T-H motif).

The protein localises to the cytoplasm. Positively regulates the expression of the arcABDCR operon under anaerobic conditions, thus playing an essential role in arginine catabolism. May also control the expression of genes encoding proteins which are involved in anaerobic metabolism. Can bind cyclic AMP. The chain is HTH-type transcriptional regulator ArcR (arcR) from Staphylococcus aureus (strain USA300 / TCH1516).